We begin with the raw amino-acid sequence, 450 residues long: Cytochrome c1 (450 aa).

The signal sequence occupies residues M1–G21. A compositionally biased stretch (low complexity) spans A24 to E58. The disordered stretch occupies residues A24 to H210. 3 stretches are compositionally biased toward acidic residues: residues A59–E77, P85–A108, and A118–A194. Positions 245, 248, and 249 each coordinate heme c. The disordered stretch occupies residues P284–G305. M373 lines the heme c pocket. A helical transmembrane segment spans residues S421–T435.

As to quaternary structure, the main subunits of complex b-c1 are: cytochrome b, cytochrome c1 and the Rieske protein. Post-translationally, binds 1 heme c group covalently per subunit.

It is found in the cell membrane. Its function is as follows. Component of the ubiquinol-cytochrome c reductase complex (complex III or cytochrome b-c1 complex), which is a respiratory chain that generates an electrochemical potential coupled to ATP synthesis. c1 functions as an electron donor to cytochrome c. This Paracoccus denitrificans protein is Cytochrome c1 (petC).